The following is a 446-amino-acid chain: Hercynine oxygenase (446 aa).

H51 contributes to the Fe cation binding site. 87–90 lines the gamma-L-glutamyl-L-cysteine pocket; that stretch reads RASR. H134 and H138 together coordinate Fe cation. Residues D416 and R420 each coordinate gamma-L-glutamyl-L-cysteine.

The protein belongs to the EgtB family. In terms of assembly, monomer. It depends on Fe(2+) as a cofactor.

The catalysed reaction is gamma-L-glutamyl-L-cysteine + hercynine + O2 = gamma-L-glutamyl-hercynylcysteine S-oxide + H2O. The protein operates within amino-acid biosynthesis; ergothioneine biosynthesis. In terms of biological role, catalyzes the oxidative sulfurization of hercynine (N-alpha,N-alpha,N-alpha-trimethyl-L-histidine) into hercynyl-gamma-L-glutamyl-L-cysteine sulfoxide, a step in the biosynthesis pathway of ergothioneine. The chain is Hercynine oxygenase from Mycolicibacterium thermoresistibile (strain ATCC 19527 / DSM 44167 / CIP 105390 / JCM 6362 / NCTC 10409 / 316) (Mycobacterium thermoresistibile).